A 376-amino-acid polypeptide reads, in one-letter code: Histidinol dehydrogenase (376 aa).

Tyr-100 and Asn-182 together coordinate NAD(+). Positions 205, 227, and 230 each coordinate substrate. Zn(2+)-binding residues include Gln-227 and His-230. Catalysis depends on proton acceptor residues Glu-275 and His-276. Substrate is bound by residues His-276, Asp-309, Glu-363, and His-368. Position 309 (Asp-309) interacts with Zn(2+). A Zn(2+)-binding site is contributed by His-368.

It belongs to the histidinol dehydrogenase family. Requires Zn(2+) as cofactor.

The enzyme catalyses L-histidinol + 2 NAD(+) + H2O = L-histidine + 2 NADH + 3 H(+). It participates in amino-acid biosynthesis; L-histidine biosynthesis; L-histidine from 5-phospho-alpha-D-ribose 1-diphosphate: step 9/9. Its function is as follows. Catalyzes the sequential NAD-dependent oxidations of L-histidinol to L-histidinaldehyde and then to L-histidine. The protein is Histidinol dehydrogenase of Thermococcus kodakarensis (strain ATCC BAA-918 / JCM 12380 / KOD1) (Pyrococcus kodakaraensis (strain KOD1)).